Reading from the N-terminus, the 338-residue chain is Limbic system-associated membrane protein (338 aa).

The signal sequence occupies residues 1–28 (MVARAQPDRKQLPLVLLRLLCLLPTGLP). Ig-like C2-type domains are found at residues 29–122 (VRSV…PKTS), 132–214 (PKIS…VRVT), and 219–306 (PTIT…LYLY). Residues Asn40, Asn66, Asn136, and Asn148 are each glycosylated (N-linked (GlcNAc...) asparagine). Cys53 and Cys111 are oxidised to a cystine. Intrachain disulfides connect Cys153–Cys197 and Cys239–Cys290. Asn279, Asn287, Asn300, and Asn315 each carry an N-linked (GlcNAc...) asparagine glycan. Asn315 carries the GPI-anchor amidated asparagine lipid modification. Positions 316–338 (GSVSLAVPLWLLAASLLCLLSKC) are cleaved as a propeptide — removed in mature form.

Belongs to the immunoglobulin superfamily. IgLON family.

The protein resides in the cell membrane. Its function is as follows. Mediates selective neuronal growth and axon targeting. Probably serves as a recognition molecule for the formation of limbic connections. In Gallus gallus (Chicken), this protein is Limbic system-associated membrane protein.